A 291-amino-acid polypeptide reads, in one-letter code: ATP synthase gamma chain (291 aa).

The protein belongs to the ATPase gamma chain family. As to quaternary structure, F-type ATPases have 2 components, CF(1) - the catalytic core - and CF(0) - the membrane proton channel. CF(1) has five subunits: alpha(3), beta(3), gamma(1), delta(1), epsilon(1). CF(0) has three main subunits: a, b and c.

The protein localises to the cell membrane. Functionally, produces ATP from ADP in the presence of a proton gradient across the membrane. The gamma chain is believed to be important in regulating ATPase activity and the flow of protons through the CF(0) complex. The chain is ATP synthase gamma chain from Streptococcus pyogenes serotype M49 (strain NZ131).